The primary structure comprises 196 residues: uncharacterized protein (196 aa).

The first 21 residues, 1-21 (MNGKQCFCFFLFHLFYTGLFA), serve as a signal peptide directing secretion. The N-palmitoyl cysteine moiety is linked to residue Cys22. The S-diacylglycerol cysteine moiety is linked to residue Cys22.

It is found in the cell membrane. This is an uncharacterized protein from Treponema pallidum (strain Nichols).